The sequence spans 246 residues: MSLQWTAVATFLYAEVFVVLLLCIPFISPKRWQKIFKSRLVELVVSYGNTFFVVLIVILVLLVIDAVREIRKYDDVTEKVNLQNNPGAMEHFHMKLFRAQRNLYIAGFSLLLSFLLRRLVTLISQQATLLASNEAFKKQAESASEAAKKYMEENDQLKKGAAVDGGKLDVGNAEVKLEEENRSLKADLQKLKDELASTKQKLEKAENQVLAMRKQSEGLTKEYDRLLEEHAKLQAAVDGPTDKKEE.

At 1-6 (MSLQWT) the chain is on the lumenal side. The helical transmembrane segment at 7-27 (AVATFLYAEVFVVLLLCIPFI) threads the bilayer. At 28 to 43 (SPKRWQKIFKSRLVEL) the chain is on the cytoplasmic side. A helical transmembrane segment spans residues 44–64 (VVSYGNTFFVVLIVILVLLVI). The Lumenal portion of the chain corresponds to 65–102 (DAVREIRKYDDVTEKVNLQNNPGAMEHFHMKLFRAQRN). Residues 103 to 123 (LYIAGFSLLLSFLLRRLVTLI) form a helical membrane-spanning segment. Residues 124–246 (SQQATLLASN…VDGPTDKKEE (123 aa)) are Cytoplasmic-facing. Residues 165–237 (GGKLDVGNAE…EEHAKLQAAV (73 aa)) adopt a coiled-coil conformation. A Di-lysine motif motif is present at residues 243–246 (KKEE).

Belongs to the BCAP29/BCAP31 family. In terms of assembly, homodimer and heterodimer with BCAP29. Binds CASP8 (isoform 9) as a complex containing BCAP31, BCAP29, BCL2 and/or BCL2L1. Forms a complex (via C-terminus) with TOMM40 which mediates the translocation of components of the mitochondrial membrane respiratory chain NADH dehydrogenase (Complex I) from the cytosol to the mitochondria; within the complex BCAP31 interacts directly with unprocessed and processed NDUFS4 and NDUFB11. Interacts with VDAC1. Interacts with VAMP3, VAMP1 and membrane IgD immunoglobulins. Interacts with HACD2. Interacts with DNM1L; may form part of a larger protein complex at the endoplasmic reticulum-mitochondrial interface during mitochondrial fission. In terms of processing, cleaved by CASP8 and other caspases.

It is found in the endoplasmic reticulum membrane. It localises to the endoplasmic reticulum-Golgi intermediate compartment membrane. Functionally, functions as a chaperone protein. Is one of the most abundant endoplasmic reticulum (ER) proteins. Plays a role in the export of secreted proteins in the ER, the recognition of abnormally folded protein and their targeting to the ER associated-degradation (ERAD). Also serves as a cargo receptor for the export of transmembrane proteins. Plays a role in the assembly of the mitochondrial membrane respiratory chain NADH dehydrogenase (Complex I) by stimulating the translocation of NDUFS4 and NDUFB11 from the cytosol to the mitochondria via interaction with TOMM40. In response to ER stress, delocalizes from the ER-mitochondria contact sites and binds BCL2. May be involved in CASP8-mediated apoptosis. The protein is B-cell receptor-associated protein 31 (BCAP31) of Pongo abelii (Sumatran orangutan).